Here is a 555-residue protein sequence, read N- to C-terminus: Glutamine--tRNA ligase (555 aa).

The short motif at 35–45 is the 'HIGH' region element; it reads PEPNGYLHIGH. Residues 36–38 and 42–48 each bind ATP; these read EPN and HIGHAKS. The L-glutamine site is built by Asp68 and Tyr213. ATP contacts are provided by residues Thr232 and 262 to 263; that span reads RL. A 'KMSKS' region motif is present at residues 269-273; sequence ITSKR.

It belongs to the class-I aminoacyl-tRNA synthetase family. In terms of assembly, monomer.

The protein resides in the cytoplasm. The catalysed reaction is tRNA(Gln) + L-glutamine + ATP = L-glutaminyl-tRNA(Gln) + AMP + diphosphate. The protein is Glutamine--tRNA ligase of Ectopseudomonas mendocina (strain ymp) (Pseudomonas mendocina).